A 60-amino-acid chain; its full sequence is Small integral membrane protein 3 (60 aa).

Residues Ile20–Cys40 form a helical membrane-spanning segment.

It is found in the membrane. This chain is Small integral membrane protein 3 (Smim3), found in Rattus norvegicus (Rat).